The chain runs to 907 residues: Valine--tRNA ligase (907 aa).

The short motif at 45-55 is the 'HIGH' region element; it reads PNVTGSLHMGH. A 'KMSKS' region motif is present at residues 554–558; that stretch reads KMSKS. Lys557 serves as a coordination point for ATP. Residues 838–870 are a coiled coil; it reads GQLIDLEAERARLVKNVSKIEQDIEKISVKLNN.

The protein belongs to the class-I aminoacyl-tRNA synthetase family. ValS type 1 subfamily. Monomer.

The protein localises to the cytoplasm. It carries out the reaction tRNA(Val) + L-valine + ATP = L-valyl-tRNA(Val) + AMP + diphosphate. Catalyzes the attachment of valine to tRNA(Val). As ValRS can inadvertently accommodate and process structurally similar amino acids such as threonine, to avoid such errors, it has a 'posttransfer' editing activity that hydrolyzes mischarged Thr-tRNA(Val) in a tRNA-dependent manner. The polypeptide is Valine--tRNA ligase (Bartonella quintana (strain Toulouse) (Rochalimaea quintana)).